The primary structure comprises 101 residues: Co-chaperonin GroES (101 aa).

Belongs to the GroES chaperonin family. In terms of assembly, heptamer of 7 subunits arranged in a ring. Interacts with the chaperonin GroEL.

It localises to the cytoplasm. Together with the chaperonin GroEL, plays an essential role in assisting protein folding. The GroEL-GroES system forms a nano-cage that allows encapsulation of the non-native substrate proteins and provides a physical environment optimized to promote and accelerate protein folding. GroES binds to the apical surface of the GroEL ring, thereby capping the opening of the GroEL channel. The chain is Co-chaperonin GroES from Thermus thermophilus (strain ATCC BAA-163 / DSM 7039 / HB27).